Here is a 532-residue protein sequence, read N- to C-terminus: MNNESICILLLLFVKITSYYSYYISPLKKNIYTRTIYKGHILKLKNDKPEIDNNIINYFKNIRSDYPFFQQNNSPIYFDNAATTHKPKSVIEKIKNFYYYNNSNIHRGIYKISRNATDNYEHVRNIVQKYINCDSSDEIIFTSGATYGINMVCNIIMDKIIKNENDEIYISYLEHNSNIIPWQENIRNKKKGKLKYIPLKKNGYINIKKFVEKINDNTKIVSINHVSNVLGNIQNINLIIKKIKKKNPNIIVIIDAAQSFPHLKYDIKKMKLKNEDPDILVTSGHKFCAPFGSGFVYIKKKLTHTSKTNPFLYGSNIITDVNKYRSKFVSSPYIFETGTQNISAILAMGEAIKYLQKINDEGNAYKYEMYLYDLFLFYLRSFLTNHLVELPYIPEPNTPIKPDKMRTTMQVRNSKVDDKYFHSEIQNQDNDYLKIFVHNTRKDNKKKIAILPLWSLNFTSFDLVTFLDFKNICIRSGHHCASLLHNNFFNINESSRISIMFYNTPEEVQYLAEQISATTHMLHSMRRNGKAV.

The signal sequence occupies residues 1–18; it reads MNNESICILLLLFVKITS. Residue K286 is modified to N6-(pyridoxal phosphate)lysine. C480 serves as the catalytic Cysteine persulfide intermediate.

This sequence belongs to the class-V pyridoxal-phosphate-dependent aminotransferase family. Csd subfamily. In terms of assembly, monomer. Interacts with SufE; interaction enhances cysteine desulfurase activity of SufS. Requires pyridoxal 5'-phosphate as cofactor.

Its subcellular location is the plastid. The protein resides in the apicoplast. It carries out the reaction (sulfur carrier)-H + L-cysteine = (sulfur carrier)-SH + L-alanine. It functions in the pathway cofactor biosynthesis; iron-sulfur cluster biosynthesis. Catalyzes sulfur activation and mobilization in sulfur mobilization (SUF) pathway for iron-sulfur (Fe-S) cluster biogenesis. Active when in complex with a partner protein SufE. Required for apicoplast maintenance. Plays a role in the development of sporozoites in oocysts in mosquitoes. The protein is Putative cysteine desulfurase PbSufS of Plasmodium berghei (strain Anka).